The following is a 160-amino-acid chain: Lipoprotein signal peptidase (160 aa).

The next 2 membrane-spanning stretches (helical) occupy residues 59-79 (PEGI…YVWI) and 84-104 (SPLF…NLID). Catalysis depends on residues Asp-113 and Asp-139. The chain crosses the membrane as a helical span at residues 132–152 (WPIFNIADACITIGACLLFFF).

It belongs to the peptidase A8 family.

The protein localises to the cell inner membrane. The enzyme catalyses Release of signal peptides from bacterial membrane prolipoproteins. Hydrolyzes -Xaa-Yaa-Zaa-|-(S,diacylglyceryl)Cys-, in which Xaa is hydrophobic (preferably Leu), and Yaa (Ala or Ser) and Zaa (Gly or Ala) have small, neutral side chains.. It participates in protein modification; lipoprotein biosynthesis (signal peptide cleavage). Functionally, this protein specifically catalyzes the removal of signal peptides from prolipoproteins. This Chlorobaculum parvum (strain DSM 263 / NCIMB 8327) (Chlorobium vibrioforme subsp. thiosulfatophilum) protein is Lipoprotein signal peptidase.